A 118-amino-acid chain; its full sequence is Ribonuclease P protein component (118 aa).

This sequence belongs to the RnpA family. In terms of assembly, consists of a catalytic RNA component (M1 or rnpB) and a protein subunit.

It carries out the reaction Endonucleolytic cleavage of RNA, removing 5'-extranucleotides from tRNA precursor.. Functionally, RNaseP catalyzes the removal of the 5'-leader sequence from pre-tRNA to produce the mature 5'-terminus. It can also cleave other RNA substrates such as 4.5S RNA. The protein component plays an auxiliary but essential role in vivo by binding to the 5'-leader sequence and broadening the substrate specificity of the ribozyme. The sequence is that of Ribonuclease P protein component from Rickettsia canadensis (strain McKiel).